Consider the following 274-residue polypeptide: Large ribosomal subunit protein uL2 (274 aa).

A disordered region spans residues 1–23; it reads MAIKIYRPTSPGRRHHSVSSFEE.

This sequence belongs to the universal ribosomal protein uL2 family. As to quaternary structure, part of the 50S ribosomal subunit. Forms a bridge to the 30S subunit in the 70S ribosome.

One of the primary rRNA binding proteins. Required for association of the 30S and 50S subunits to form the 70S ribosome, for tRNA binding and peptide bond formation. It has been suggested to have peptidyltransferase activity; this is somewhat controversial. Makes several contacts with the 16S rRNA in the 70S ribosome. In Dehalococcoides mccartyi (strain ATCC BAA-2100 / JCM 16839 / KCTC 5957 / BAV1), this protein is Large ribosomal subunit protein uL2.